We begin with the raw amino-acid sequence, 423 residues long: Endochitinase 42 (423 aa).

Residues 1–22 (MLSFLGKSVALLAALQATLSSP) form the signal peptide. Positions 23–34 (KPGHRRASVEKR) are excised as a propeptide. Positions 38–401 (YANSVYFTNW…GTSHRALGGL (364 aa)) constitute a GH18 domain. Chitin is bound by residues 102 to 103 (GT) and 129 to 132 (GGWT). The Proton donor role is filled by E171. Position 172 (Y172) interacts with chitin. N218 carries an N-linked (GlcNAc...) asparagine glycan. Residues 237 to 240 (MAYD) and W378 each bind chitin.

Belongs to the glycosyl hydrolase 18 family. Chitinase class V subfamily.

The protein resides in the secreted. The enzyme catalyses Random endo-hydrolysis of N-acetyl-beta-D-glucosaminide (1-&gt;4)-beta-linkages in chitin and chitodextrins.. In terms of biological role, secreted chitinase involved in the degradation of chitin, a component of the cell walls of fungi and exoskeletal elements of some animals (including worms and arthropods). Plays a morphogenetic role during apical growth, cell division and differentiation (cell wall morphogenesis). Also acts as an antifungal agent. Involved in the degradation and further assimilation of phytopathogenic fungi, namely mycoparasitism, the major mechanism accounting for the antagonistic activity against phytopathogenic fungi displayed by Trichoderma. This chain is Endochitinase 42 (chit42), found in Trichoderma harzianum (Hypocrea lixii).